The sequence spans 720 residues: Calcium/calmodulin-dependent protein kinase type II (720 aa).

In terms of domain architecture, Protein kinase spans 12-269 (YDVKEELGKG…ADQALKVPWI (258 aa)). ATP-binding positions include 18–26 (LGKGAFSVV) and Lys-41. The active-site Proton acceptor is Asp-134. Thr-284 carries the post-translational modification Phosphothreonine; by autocatalysis. 2 disordered regions span residues 317 to 345 (SDSTGSVASNGSTTHDASQVAGTSSQPTS) and 504 to 586 (DNLS…NLSA). 2 stretches are compositionally biased toward polar residues: residues 504–514 (DNLSASTSSDL) and 526–540 (PPSTIKESSESSQTI). Residues 569–586 (SSSNSSTASKSSSTNLSA) are compositionally biased toward low complexity.

It belongs to the protein kinase superfamily. CAMK Ser/Thr protein kinase family. CaMK subfamily. In terms of assembly, dodecamer. Subunits are tightly packed around a central ring-shaped scaffold with extensive contacts between the regulatory segment of one kinase and the catalytic domain of another enabling cooperative activation of a subunit by the adjacent molecule. Interacts with and phosphorylates daf-16; the interaction promotes daf-16 nuclear localization. Interacts with egl-2 and tir-1. Interacts with nsy-1. Mg(2+) is required as a cofactor. In terms of tissue distribution, expressed in the nervous system. Observed in the ADF and AWC neurons. Position in AWC neurons is regulated by microtubules. Localized to clusters in ventral cord neurites which appear to be required for glr-1 trafficking. Also present in oocytes.

Its subcellular location is the cytoplasm. The protein resides in the cell projection. It is found in the axon. The protein localises to the perikaryon. It carries out the reaction L-seryl-[protein] + ATP = O-phospho-L-seryl-[protein] + ADP + H(+). It catalyses the reaction L-threonyl-[protein] + ATP = O-phospho-L-threonyl-[protein] + ADP + H(+). With respect to regulation, ca2(+)/calmodulin binding removes an autoinhibitory regulatory segment located C-terminal to the kinase domain. This releases the catalytic activity of the enzyme and makes accessible a regulatory residue Thr-284. Phosphorylation of Thr-284 by another kinase domain within the oligomeric holoenzyme keeps CaMKII active in the absence of Ca(2+)/calmodulin by preventing the rebinding of the regulatory segment to the kinase domain and by increasing the affinity of calmodulin for the enzyme. Can respond to high-frequency Ca(2+) pulses to become Ca(2+) independent. Functionally, acts in the signaling of a variety of pathways and processes. Phosphorylates 'Ser-319' of daf-16 in response to stress signals, such as heat, starvation and oxidation, which plays a role in prolonging lifespan. Required for viability under chronic osmotic stress in which it acts downstream of osr-1. Has roles in locomotion, oocyte maturation, brood size, egg laying, defecation, meiotic maturation and neuronal cell fate specification. Required for the regulation of synaptic density and neuromuscular junction morphology. Regulates the synaptic trafficking of glr-1. Bidirectional modulator of neurotransmitter release with negative modulatory effects mainly mediated via slo-1 activation. Involved in activation of ADF neurons and increased tph-1 transcription following exposure to pathogenic bacteria which leads to learned olfactory aversion to the bacteria. Implicated in the muscle regulation of spicule protraction. In conjunction with egl-2 has a role in the suppression of mating behavior under food deprivation to encourage foraging. Involved in restricting str-2 expression to only one of the two AWC neurons. May suppress the functional response to an internal pacemaker, perhaps by modulating the activity of the IP3 receptor. The protein is Calcium/calmodulin-dependent protein kinase type II (unc-43) of Caenorhabditis elegans.